Reading from the N-terminus, the 320-residue chain is ATP-dependent 6-phosphofructokinase (320 aa).

Position 12 (G12) interacts with ATP. ADP is bound at residue 22–26 (RGVVR). Residues 73 to 74 (RF) and 103 to 106 (GDGS) contribute to the ATP site. D104 is a binding site for Mg(2+). 126–128 (TID) contributes to the substrate binding site. D128 functions as the Proton acceptor in the catalytic mechanism. R155 contacts ADP. Residues R163 and 170–172 (MGR) each bind substrate. ADP contacts are provided by residues 186–188 (GCE), K212, and 214–216 (KKH). Substrate-binding positions include E223, R244, and 250 to 253 (HIQR).

This sequence belongs to the phosphofructokinase type A (PFKA) family. ATP-dependent PFK group I subfamily. Prokaryotic clade 'B1' sub-subfamily. Homotetramer. It depends on Mg(2+) as a cofactor.

The protein resides in the cytoplasm. It catalyses the reaction beta-D-fructose 6-phosphate + ATP = beta-D-fructose 1,6-bisphosphate + ADP + H(+). The protein operates within carbohydrate degradation; glycolysis; D-glyceraldehyde 3-phosphate and glycerone phosphate from D-glucose: step 3/4. Its activity is regulated as follows. Allosterically activated by ADP and other diphosphonucleosides, and allosterically inhibited by phosphoenolpyruvate. Catalyzes the phosphorylation of D-fructose 6-phosphate to fructose 1,6-bisphosphate by ATP, the first committing step of glycolysis. The protein is ATP-dependent 6-phosphofructokinase of Vibrio cholerae serotype O1 (strain ATCC 39315 / El Tor Inaba N16961).